We begin with the raw amino-acid sequence, 473 residues long: Glutamate--tRNA ligase 2 (473 aa).

The short motif at P11–G21 is the 'HIGH' region element. Basic and acidic residues predominate over residues K113–S133. A disordered region spans residues K113–P136. The short motif at K240–R244 is the 'KMSKS' region element. ATP is bound at residue K243.

The protein belongs to the class-I aminoacyl-tRNA synthetase family. Glutamate--tRNA ligase type 1 subfamily. As to quaternary structure, monomer.

The protein localises to the cytoplasm. The enzyme catalyses tRNA(Glu) + L-glutamate + ATP = L-glutamyl-tRNA(Glu) + AMP + diphosphate. Its function is as follows. Catalyzes the attachment of glutamate to tRNA(Glu) in a two-step reaction: glutamate is first activated by ATP to form Glu-AMP and then transferred to the acceptor end of tRNA(Glu). This chain is Glutamate--tRNA ligase 2, found in Brucella abortus (strain S19).